Here is a 159-residue protein sequence, read N- to C-terminus: Globin CTT-W (159 aa).

An N-terminal signal peptide occupies residues 1-16 (MKFLVILTLCIAGAIA). One can recognise a Globin domain in the interval 17 to 159 (HCDKAPFIKA…HHAIVYSILE (143 aa)). Heme b contacts are provided by His-73 and His-108.

Belongs to the globin family.

This chain is Globin CTT-W (CTT-W), found in Chironomus thummi thummi (Midge).